A 591-amino-acid chain; its full sequence is Aspartate--tRNA ligase (591 aa).

Glutamate 172 serves as a coordination point for L-aspartate. The aspartate stretch occupies residues glutamine 196–lysine 199. Arginine 218 contacts L-aspartate. Residues arginine 218–glutamate 220 and glutamine 227 each bind ATP. Residue histidine 449 participates in L-aspartate binding. Residue glutamate 483 coordinates ATP. Arginine 490 contacts L-aspartate. Glycine 535 to arginine 538 lines the ATP pocket.

Belongs to the class-II aminoacyl-tRNA synthetase family. Type 1 subfamily. As to quaternary structure, homodimer.

The protein localises to the cytoplasm. It carries out the reaction tRNA(Asp) + L-aspartate + ATP = L-aspartyl-tRNA(Asp) + AMP + diphosphate. In terms of biological role, catalyzes the attachment of L-aspartate to tRNA(Asp) in a two-step reaction: L-aspartate is first activated by ATP to form Asp-AMP and then transferred to the acceptor end of tRNA(Asp). This chain is Aspartate--tRNA ligase, found in Actinobacillus pleuropneumoniae serotype 5b (strain L20).